The sequence spans 102 residues: MVTEIKSLKQLGELFASNNKVIIDFWAEWCGPCKITGPEFAKAASEVSTVAFAKVNVDEQTDIAAAYKITSLPTIVLFEKGQEKHRAIGFMPKAKIVQLVSQ.

The 101-residue stretch at 2 to 102 (VTEIKSLKQL…KAKIVQLVSQ (101 aa)) folds into the Thioredoxin domain. Cysteine 30 and cysteine 33 form a disulfide bridge.

The protein belongs to the thioredoxin family.

Its function is as follows. Participates in various redox reactions through the reversible oxidation of its active center dithiol to a disulfide and catalyzes dithiol-disulfide exchange reactions. The sequence is that of Thioredoxin (trxA) from Mycoplasma pneumoniae (strain ATCC 29342 / M129 / Subtype 1) (Mycoplasmoides pneumoniae).